The sequence spans 255 residues: Thiazole synthase (255 aa).

Lys-96 serves as the catalytic Schiff-base intermediate with DXP. 1-deoxy-D-xylulose 5-phosphate is bound by residues Gly-157, 183 to 184 (AG), and 205 to 206 (NT).

The protein belongs to the ThiG family. Homotetramer. Forms heterodimers with either ThiH or ThiS.

Its subcellular location is the cytoplasm. It carries out the reaction [ThiS sulfur-carrier protein]-C-terminal-Gly-aminoethanethioate + 2-iminoacetate + 1-deoxy-D-xylulose 5-phosphate = [ThiS sulfur-carrier protein]-C-terminal Gly-Gly + 2-[(2R,5Z)-2-carboxy-4-methylthiazol-5(2H)-ylidene]ethyl phosphate + 2 H2O + H(+). It functions in the pathway cofactor biosynthesis; thiamine diphosphate biosynthesis. Functionally, catalyzes the rearrangement of 1-deoxy-D-xylulose 5-phosphate (DXP) to produce the thiazole phosphate moiety of thiamine. Sulfur is provided by the thiocarboxylate moiety of the carrier protein ThiS. In vitro, sulfur can be provided by H(2)S. The sequence is that of Thiazole synthase from Geobacillus thermodenitrificans (strain NG80-2).